Reading from the N-terminus, the 337-residue chain is Holliday junction branch migration complex subunit RuvB (337 aa).

Residues 4-184 (ADRLIEPIAS…FGIVQRLEFY (181 aa)) are large ATPase domain (RuvB-L). ATP is bound by residues Ile-23, Arg-24, Gly-65, Lys-68, Thr-69, Thr-70, 131-133 (EDY), Arg-174, Tyr-184, and Arg-221. Thr-69 contributes to the Mg(2+) binding site. The segment at 185-255 (NVADLSTIVS…TAAAALDMLE (71 aa)) is small ATPAse domain (RuvB-S). The interval 258–337 (SEGFDIMDRK…FGITKDQTKD (80 aa)) is head domain (RuvB-H). Residues Arg-294, Arg-313, and Arg-318 each contribute to the DNA site.

This sequence belongs to the RuvB family. In terms of assembly, homohexamer. Forms an RuvA(8)-RuvB(12)-Holliday junction (HJ) complex. HJ DNA is sandwiched between 2 RuvA tetramers; dsDNA enters through RuvA and exits via RuvB. An RuvB hexamer assembles on each DNA strand where it exits the tetramer. Each RuvB hexamer is contacted by two RuvA subunits (via domain III) on 2 adjacent RuvB subunits; this complex drives branch migration. In the full resolvosome a probable DNA-RuvA(4)-RuvB(12)-RuvC(2) complex forms which resolves the HJ.

The protein localises to the cytoplasm. It carries out the reaction ATP + H2O = ADP + phosphate + H(+). In terms of biological role, the RuvA-RuvB-RuvC complex processes Holliday junction (HJ) DNA during genetic recombination and DNA repair, while the RuvA-RuvB complex plays an important role in the rescue of blocked DNA replication forks via replication fork reversal (RFR). RuvA specifically binds to HJ cruciform DNA, conferring on it an open structure. The RuvB hexamer acts as an ATP-dependent pump, pulling dsDNA into and through the RuvAB complex. RuvB forms 2 homohexamers on either side of HJ DNA bound by 1 or 2 RuvA tetramers; 4 subunits per hexamer contact DNA at a time. Coordinated motions by a converter formed by DNA-disengaged RuvB subunits stimulates ATP hydrolysis and nucleotide exchange. Immobilization of the converter enables RuvB to convert the ATP-contained energy into a lever motion, pulling 2 nucleotides of DNA out of the RuvA tetramer per ATP hydrolyzed, thus driving DNA branch migration. The RuvB motors rotate together with the DNA substrate, which together with the progressing nucleotide cycle form the mechanistic basis for DNA recombination by continuous HJ branch migration. Branch migration allows RuvC to scan DNA until it finds its consensus sequence, where it cleaves and resolves cruciform DNA. The chain is Holliday junction branch migration complex subunit RuvB from Colwellia psychrerythraea (strain 34H / ATCC BAA-681) (Vibrio psychroerythus).